The primary structure comprises 954 residues: Glycine dehydrogenase (decarboxylating) (954 aa).

Residue lysine 704 is modified to N6-(pyridoxal phosphate)lysine.

Belongs to the GcvP family. In terms of assembly, the glycine cleavage system is composed of four proteins: P, T, L and H. Pyridoxal 5'-phosphate serves as cofactor.

It carries out the reaction N(6)-[(R)-lipoyl]-L-lysyl-[glycine-cleavage complex H protein] + glycine + H(+) = N(6)-[(R)-S(8)-aminomethyldihydrolipoyl]-L-lysyl-[glycine-cleavage complex H protein] + CO2. Functionally, the glycine cleavage system catalyzes the degradation of glycine. The P protein binds the alpha-amino group of glycine through its pyridoxal phosphate cofactor; CO(2) is released and the remaining methylamine moiety is then transferred to the lipoamide cofactor of the H protein. The sequence is that of Glycine dehydrogenase (decarboxylating) from Rhizobium leguminosarum bv. trifolii (strain WSM2304).